A 486-amino-acid polypeptide reads, in one-letter code: ATP synthase subunit beta (486 aa).

Residue 170 to 177 (GGAGVGKT) coordinates ATP.

This sequence belongs to the ATPase alpha/beta chains family. As to quaternary structure, F-type ATPases have 2 components, CF(1) - the catalytic core - and CF(0) - the membrane proton channel. CF(1) has five subunits: alpha(3), beta(3), gamma(1), delta(1), epsilon(1). CF(0) has three main subunits: a(1), b(2) and c(9-12). The alpha and beta chains form an alternating ring which encloses part of the gamma chain. CF(1) is attached to CF(0) by a central stalk formed by the gamma and epsilon chains, while a peripheral stalk is formed by the delta and b chains.

It localises to the cell membrane. It carries out the reaction ATP + H2O + 4 H(+)(in) = ADP + phosphate + 5 H(+)(out). Functionally, produces ATP from ADP in the presence of a proton gradient across the membrane. The catalytic sites are hosted primarily by the beta subunits. This chain is ATP synthase subunit beta, found in Clavibacter michiganensis subsp. michiganensis (strain NCPPB 382).